A 323-amino-acid polypeptide reads, in one-letter code: Prenyl transferase (323 aa).

Residues K46, R49, and H81 each contribute to the isopentenyl diphosphate site. 2 residues coordinate Mg(2+): D88 and D92. R97 provides a ligand contact to an all-trans-polyprenyl diphosphate. R98 contacts isopentenyl diphosphate. Positions 174, 175, and 212 each coordinate an all-trans-polyprenyl diphosphate.

It belongs to the FPP/GGPP synthase family. Mg(2+) serves as cofactor.

It localises to the plastid. The protein localises to the chloroplast. Possible role in synthesis of the nonaprenyl side chain of plastoquinone or in synthesis of other prenyl chains such as undekaprenyl pyrophosphate. The sequence is that of Prenyl transferase (preA) from Porphyra purpurea (Red seaweed).